Reading from the N-terminus, the 711-residue chain is Serine/threonine-protein kinase ATG1b (711 aa).

The Protein kinase domain occupies 20 to 277; that stretch reads YAVGRQIGSG…FEEFFHHPFL (258 aa). ATP-binding positions include 26-34 and K49; that span reads IGSGSFSVV. Residue D142 is the Proton acceptor of the active site. Disordered stretches follow at residues 318–342 and 383–419; these read LPFF…TSPM and FEGH…SMDQ. The segment covering 383 to 393 has biased composition (basic and acidic residues); it reads FEGHRLSDRSQ. Residues 394–410 show a composition bias toward polar residues; that stretch reads FKPSSLPDSRSFSTQGR. The AIM (Atg8-family-interacting motif) signature appears at 421-424; that stretch reads YVLI.

Belongs to the protein kinase superfamily. Ser/Thr protein kinase family.

Its subcellular location is the cytoplasmic vesicle. It localises to the autophagosome. Its function is as follows. Serine/threonine protein kinase involved in autophagy. The ATG1-ATG13 protein kinase complex regulates downstream events required for autophagosome enclosure and/or vacuolar delivery. This is Serine/threonine-protein kinase ATG1b from Arabidopsis thaliana (Mouse-ear cress).